Reading from the N-terminus, the 306-residue chain is MAAPLPRSLSCLSRAVGWWSRQPILMTQSTAVVPVRTKKRFTPPIYQPKYKTEKEFTEYARKAGLVIPQESLERPIHLACTASIFDAYVPPEGDARVSSLSKEGLAQRTERLKKNVASQLSIRRIKESDPNFKVKDFPEKAQDIFIEAHLCLNNSDHDRLHTLVTENCFPDMVWDIKYKTVSWSFVESLEPPQVVQVRCSSLVTKSNTYGQVTVRMHTRQTLAIYDRFGRLMYGQEDVPRDVLEYVVFEKHLANPYGSWRMHGKIVPPWAPPKQPILKTVMIPGPQLKPGEEYEELQREAHKPQLA.

It belongs to the mitochondrion-specific ribosomal protein mL45 family. In terms of assembly, component of the mitochondrial ribosome large subunit (39S) which comprises a 16S rRNA and about 50 distinct proteins.

Its subcellular location is the mitochondrion. Its function is as follows. Component of the mitochondrial large ribosomal subunit (mt-LSU). Within the mitochondrial ribosomes, required to direct the nascent polypeptide toward the tunnel exit and position the exit at a distance from the membrane surface. The sequence is that of Large ribosomal subunit protein mL45 (MRPL45) from Bos taurus (Bovine).